The primary structure comprises 211 residues: Probable GTP-binding protein EngB (211 aa).

An EngB-type G domain is found at 21 to 205 (LMATIVFVGR…KNRIYEIIRE (185 aa)). GTP contacts are provided by residues 29-36 (GRSNVGKS), 54-58 (GVTRK), 71-74 (DMPG), 151-154 (NKLD), and 184-186 (ISA). Mg(2+) contacts are provided by S36 and T56.

Belongs to the TRAFAC class TrmE-Era-EngA-EngB-Septin-like GTPase superfamily. EngB GTPase family. Requires Mg(2+) as cofactor.

Necessary for normal cell division and for the maintenance of normal septation. The sequence is that of Probable GTP-binding protein EngB from Pyrococcus abyssi (strain GE5 / Orsay).